A 341-amino-acid chain; its full sequence is Bis(monoacylglycero)phosphate synthase CLN5 (341 aa).

Residues 1–13 are Cytoplasmic-facing; sequence MLRGGPCGAHWRP. The chain crosses the membrane as a helical; Signal-anchor for type II membrane protein span at residues 14 to 30; that stretch reads ALALALLGLATILGASP. Topologically, residues 31–341 are lumenal; that stretch reads TSGQRWPVPY…PTRHTTFTDL (311 aa). Intrachain disulfides connect cysteine 53/cysteine 142 and cysteine 60/cysteine 148. The active-site Proton acceptor is histidine 100. N-linked (GlcNAc...) asparagine glycans are attached at residues asparagine 113, asparagine 126, asparagine 161, and asparagine 186. Cysteine 214 (nucleophile; Acyl-thioester intermediate) is an active-site residue. 3 N-linked (GlcNAc...) asparagine glycosylation sites follow: asparagine 238, asparagine 254, and asparagine 264. Residues 287–326 are membrane-anchoring; the sequence is FLMNFLKIFDTVIIHRQFYLFYNFEYWFLPMKPPFVKITY.

It belongs to the CLN5 family. In terms of assembly, multimer. Interacts with PPT1, TPP1, CLN3, CLN6, CLN8, ATP5F1A and ATP5F1B. Interacts with SORT1, RAB5A and RAB7A. Post-translationally, N-glycosylated with both high mannose and complex type sugars. Glycosylation is important for proper folding and trafficking to the lysosomes. The type II membrane signal anchor is proteolytically cleaved to produce a mature form that is transported to the lysosomes (Bis(monoacylglycero)phosphate synthase CLN5, secreted form). In terms of processing, can undergo proteolytic cleavage at the C-terminus, probably by a cysteine protease and may involve the removal of approximately 10-15 residues from the C-terminal end. In terms of tissue distribution, heart, kidney, liver, spleen, muscle and rectum (at protein level).

The protein resides in the lysosome. Its subcellular location is the membrane. It carries out the reaction S-hexadecanoyl-L-cysteinyl-[protein] + H2O = L-cysteinyl-[protein] + hexadecanoate + H(+). The catalysed reaction is 2 1-acyl-sn-glycero-3-phospho-(1'-sn-glycerol) = 1-acyl-sn-glycero-3-phospho-(3'-acyl-sn-1'-glycerol) + sn-glycero-3-phospho-(1'-sn-glycerol). The enzyme catalyses 2 1-(9Z-octadecenoyl)-sn-glycero-3-phospho-(1'-sn-glycerol) = 1-(9Z-octadecenoyl)-sn-glycero-3-phospho-(3'-(9Z-octadecenoyl)-1'-sn-glycerol) + sn-glycero-3-phospho-(1'-sn-glycerol). It catalyses the reaction 2 1-octadecanoyl-sn-glycero-3-phospho-(1'-sn-glycerol) = 1-octadecanoyl-sn-glycero-3-phospho-(3'-octadecanoyl-1'-sn-glycerol) + sn-glycero-3-phospho-(1'-sn-glycerol). It carries out the reaction 2 1-hexadecanoyl-sn-glycero-3-phospho-(1'-sn-glycerol) = 1-hexadecanoyl-sn-glycero-3-phospho-(3'-hexadecanoyl-1'-sn-glycerol) + sn-glycero-3-phospho-(1'-sn-glycerol). The catalysed reaction is 2 1-tetradecanoyl-sn-glycero-3-phospho-(1'-sn-glycerol) = 1-tetradecanoyl-sn-glycero-3-phospho-(3'-tetradecanoyl-1'-sn-glycerol) + sn-glycero-3-phospho-(1'-sn-glycerol). In terms of biological role, catalyzes the synthesis of bis(monoacylglycero)phosphate (BMP) via transacylation of 2 molecules of lysophosphatidylglycerol (LPG). BMP also known as lysobisphosphatidic acid plays a key role in the formation of intraluminal vesicles and in maintaining intracellular cholesterol homeostasis. Can use only LPG as the exclusive lysophospholipid acyl donor for base exchange and displays BMP synthase activity towards various LPGs (LPG 14:0, LPG 16:0, LPG 18:0, LPG 18:1) with a higher preference for longer chain lengths. Plays a role in influencing the retrograde trafficking of lysosomal sorting receptors SORT1 and IGF2R from the endosomes to the trans-Golgi network by controlling the recruitment of retromer complex to the endosomal membrane. Regulates the localization and activation of RAB7A which is required to recruit the retromer complex to the endosomal membrane. Functionally, exhibits palmitoyl protein thioesterase (S-depalmitoylation) activity in vitro and most likely plays a role in protein S-depalmitoylation. The chain is Bis(monoacylglycero)phosphate synthase CLN5 (Cln5) from Mus musculus (Mouse).